A 448-amino-acid chain; its full sequence is Probable glycine dehydrogenase (decarboxylating) subunit 1 (448 aa).

The protein belongs to the GcvP family. N-terminal subunit subfamily. The glycine cleavage system is composed of four proteins: P, T, L and H. In this organism, the P 'protein' is a heterodimer of two subunits.

It carries out the reaction N(6)-[(R)-lipoyl]-L-lysyl-[glycine-cleavage complex H protein] + glycine + H(+) = N(6)-[(R)-S(8)-aminomethyldihydrolipoyl]-L-lysyl-[glycine-cleavage complex H protein] + CO2. Its function is as follows. The glycine cleavage system catalyzes the degradation of glycine. The P protein binds the alpha-amino group of glycine through its pyridoxal phosphate cofactor; CO(2) is released and the remaining methylamine moiety is then transferred to the lipoamide cofactor of the H protein. This chain is Probable glycine dehydrogenase (decarboxylating) subunit 1, found in Bacillus licheniformis (strain ATCC 14580 / DSM 13 / JCM 2505 / CCUG 7422 / NBRC 12200 / NCIMB 9375 / NCTC 10341 / NRRL NRS-1264 / Gibson 46).